A 379-amino-acid chain; its full sequence is Glutamate 5-kinase (379 aa).

Lys15 is an ATP binding site. Residues Ser54, Asp144, and Asn156 each contribute to the substrate site. 176–177 (TD) provides a ligand contact to ATP. The PUA domain occupies 282–360 (KGVILVDAGA…GEIERALGYK (79 aa)).

It belongs to the glutamate 5-kinase family.

The protein localises to the cytoplasm. The catalysed reaction is L-glutamate + ATP = L-glutamyl 5-phosphate + ADP. It participates in amino-acid biosynthesis; L-proline biosynthesis; L-glutamate 5-semialdehyde from L-glutamate: step 1/2. Its function is as follows. Catalyzes the transfer of a phosphate group to glutamate to form L-glutamate 5-phosphate. This Anaeromyxobacter dehalogenans (strain 2CP-C) protein is Glutamate 5-kinase.